The primary structure comprises 781 residues: uncharacterized protein (781 aa).

The tract at residues Met1–Asp34 is disordered. Ser29 carries the phosphoserine modification. 2 consecutive RRM domains span residues Gly195–Glu273 and Arg295–Gln418. The interval Ser345–Gln375 is disordered. Positions Thr347–Asn364 are enriched in low complexity. Positions Lys365 to Ala374 are enriched in polar residues. Phosphoserine is present on residues Ser433, Ser435, Ser482, and Ser485. Thr486 bears the Phosphothreonine mark. Residue Ser501 is modified to Phosphoserine. The 99-residue stretch at Ser540–Lys638 folds into the RRM 3 domain. Residues Gly640–Tyr668 are disordered.

In terms of assembly, interacts with RBG1.

This is an uncharacterized protein from Saccharomyces cerevisiae (strain ATCC 204508 / S288c) (Baker's yeast).